A 443-amino-acid chain; its full sequence is Xaa-Pro dipeptidase (443 aa).

5 residues coordinate Mn(2+): Asp-246, Asp-257, His-339, Glu-384, and Glu-423.

It belongs to the peptidase M24B family. Bacterial-type prolidase subfamily. Mn(2+) serves as cofactor.

It carries out the reaction Xaa-L-Pro dipeptide + H2O = an L-alpha-amino acid + L-proline. Splits dipeptides with a prolyl residue in the C-terminal position. This is Xaa-Pro dipeptidase from Shigella flexneri.